Here is a 322-residue protein sequence, read N- to C-terminus: uncharacterized protein (322 aa).

Over residues 1 to 17 the composition is skewed to low complexity; sequence MASMAAAIAASRSAVMS. The interval 1-22 is disordered; sequence MASMAAAIAASRSAVMSGNRPL. Residue Ala-2 is modified to N-acetylalanine. Ser-37 carries the phosphoserine modification. The segment at 81 to 104 is disordered; the sequence is AAAADAGDVRDPARFPGLRGPTGQ. At Ser-130 the chain carries Phosphoserine. Polar residues-rich tracts occupy residues 142–153 and 161–177; these read QEPSAATVTSDA and QGTQ…SSSL. The interval 142–301 is disordered; that stretch reads QEPSAATVTS…DDDALFSEPA (160 aa). Ser-176 is subject to Phosphoserine. The segment covering 183–203 has biased composition (basic and acidic residues); that stretch reads ARKEEEAPFWKINAERSREGP. Polar residues predominate over residues 245–255; it reads QEQQTLPSVSA.

It is found in the cytoplasm. This is an uncharacterized protein from Mus musculus (Mouse).